The chain runs to 255 residues: Reaction center protein L chain (255 aa).

Helical transmembrane passes span 12-35, 64-92, and 95-120; these read GFFGVTTCLFASLGIALILLGTAL, GLWQLITICAIGRFCCWALRQVEIARKLG, and LHIPFAFSFAIFAYLALVVIRPLLLG. (7R,8Z)-bacteriochlorophyll b is bound by residues H133 and H153. A helical membrane pass occupies residues 150 to 179; the sequence is NPAHMIGITFFFTNCMAFGMHGSIILSVLN. H170 contributes to the Fe cation binding site. Residue F196 coordinates a ubiquinone. The helical transmembrane segment at 205-231 threads the bilayer; it reads GTLGIHRLGVFLAISAAFWSAVCIILS. Residue H210 participates in Fe cation binding.

Belongs to the reaction center PufL/M/PsbA/D family. As to quaternary structure, reaction center is composed of four bacteriochlorophylls, two bacteriopheophytins, two ubiquinones, one iron, and three highly hydrophobic polypeptide chains (designated L, M, and H).

The protein localises to the cellular chromatophore membrane. In terms of biological role, the reaction center is a membrane-bound complex that mediates the initial photochemical event in the electron transfer process of photosynthesis. The protein is Reaction center protein L chain (pufL) of Pararhodospirillum photometricum (Rhodospirillum photometricum).